The primary structure comprises 427 residues: Serine hydroxymethyltransferase (427 aa).

Residues Leu118 and 122-124 (GHL) contribute to the (6S)-5,6,7,8-tetrahydrofolate site. Residue Lys227 is modified to N6-(pyridoxal phosphate)lysine. (6S)-5,6,7,8-tetrahydrofolate-binding positions include Glu243 and 351-353 (SPF).

The protein belongs to the SHMT family. Homodimer. The cofactor is pyridoxal 5'-phosphate.

The protein resides in the cytoplasm. It catalyses the reaction (6R)-5,10-methylene-5,6,7,8-tetrahydrofolate + glycine + H2O = (6S)-5,6,7,8-tetrahydrofolate + L-serine. Its pathway is one-carbon metabolism; tetrahydrofolate interconversion. It participates in amino-acid biosynthesis; glycine biosynthesis; glycine from L-serine: step 1/1. In terms of biological role, catalyzes the reversible interconversion of serine and glycine with tetrahydrofolate (THF) serving as the one-carbon carrier. This reaction serves as the major source of one-carbon groups required for the biosynthesis of purines, thymidylate, methionine, and other important biomolecules. Also exhibits THF-independent aldolase activity toward beta-hydroxyamino acids, producing glycine and aldehydes, via a retro-aldol mechanism. In Thermotoga neapolitana (strain ATCC 49049 / DSM 4359 / NBRC 107923 / NS-E), this protein is Serine hydroxymethyltransferase.